The following is a 312-amino-acid chain: Pantothenate synthetase (312 aa).

Position 42 to 49 (Met42 to His49) interacts with ATP. The active-site Proton donor is the His49. Residue Gln73 participates in (R)-pantoate binding. Gln73 contacts beta-alanine. ATP is bound at residue Gly159–Asp162. Gln165 is a (R)-pantoate binding site. ATP-binding positions include Val188 and Leu196 to Arg199.

The protein belongs to the pantothenate synthetase family. In terms of assembly, homodimer.

The protein resides in the cytoplasm. The catalysed reaction is (R)-pantoate + beta-alanine + ATP = (R)-pantothenate + AMP + diphosphate + H(+). Its pathway is cofactor biosynthesis; (R)-pantothenate biosynthesis; (R)-pantothenate from (R)-pantoate and beta-alanine: step 1/1. Catalyzes the condensation of pantoate with beta-alanine in an ATP-dependent reaction via a pantoyl-adenylate intermediate. The chain is Pantothenate synthetase from Rhodococcus jostii (strain RHA1).